The following is a 442-amino-acid chain: Trigger factor (442 aa).

Positions 176–259 (GDFISLSLYV…VNAVIEISSP (84 aa)) constitute a PPIase FKBP-type domain.

This sequence belongs to the FKBP-type PPIase family. Tig subfamily.

It is found in the cytoplasm. It catalyses the reaction [protein]-peptidylproline (omega=180) = [protein]-peptidylproline (omega=0). In terms of biological role, involved in protein export. Acts as a chaperone by maintaining the newly synthesized protein in an open conformation. Functions as a peptidyl-prolyl cis-trans isomerase. The protein is Trigger factor of Chlamydia trachomatis serovar A (strain ATCC VR-571B / DSM 19440 / HAR-13).